Reading from the N-terminus, the 424-residue chain is L-glutamine:2-deoxy-scyllo-inosose aminotransferase (424 aa).

N6-(pyridoxal phosphate)lysine is present on Lys-202.

Belongs to the DegT/DnrJ/EryC1 family. L-glutamine:2-deoxy-scyllo-inosose/scyllo-inosose aminotransferase subfamily. The cofactor is pyridoxal 5'-phosphate.

The enzyme catalyses 2-deoxy-L-scyllo-inosose + L-glutamine = 2-deoxy-scyllo-inosamine + 2-oxoglutaramate. The catalysed reaction is 3-amino-2,3-dideoxy-scyllo-inosose + L-glutamine = 2-deoxystreptamine + 2-oxoglutaramate. Its pathway is metabolic intermediate biosynthesis; 2-deoxystreptamine biosynthesis; 2-deoxystreptamine from D-glucose 6-phosphate: step 2/4. It functions in the pathway metabolic intermediate biosynthesis; 2-deoxystreptamine biosynthesis; 2-deoxystreptamine from D-glucose 6-phosphate: step 4/4. The protein operates within antibiotic biosynthesis; ribostamycin biosynthesis. In terms of biological role, catalyzes the PLP-dependent transamination of 2-deoxy-scyllo-inosose (2-DOI) to form 2-deoxy-scyllo-inosamine (2-DOIA) using L-glutamine as the amino donor. Also catalyzes the transamination of 3-amino-2,3-dideoxy-scyllo-inosose (keto-2-DOIA) into 2-deoxystreptamine (2-DOS). The chain is L-glutamine:2-deoxy-scyllo-inosose aminotransferase (rbmB) from Streptomyces ribosidificus.